The primary structure comprises 199 residues: Thymidine kinase (199 aa).

ATP-binding positions include 23 to 30 (GSMFSGKT) and 95 to 98 (DEAQ). The Proton acceptor role is filled by E96. C152, C155, C184, and C187 together coordinate Zn(2+).

Belongs to the thymidine kinase family. Homotetramer.

Its subcellular location is the cytoplasm. The catalysed reaction is thymidine + ATP = dTMP + ADP + H(+). This Bacteroides fragilis (strain YCH46) protein is Thymidine kinase.